Here is a 319-residue protein sequence, read N- to C-terminus: Beta-ketoacyl-[acyl-carrier-protein] synthase III (319 aa).

Residues C115 and H246 contribute to the active site. The tract at residues 247-251 (QANLR) is ACP-binding. N276 is an active-site residue.

It belongs to the thiolase-like superfamily. FabH family. Homodimer.

Its subcellular location is the cytoplasm. It catalyses the reaction malonyl-[ACP] + acetyl-CoA + H(+) = 3-oxobutanoyl-[ACP] + CO2 + CoA. It functions in the pathway lipid metabolism; fatty acid biosynthesis. Catalyzes the condensation reaction of fatty acid synthesis by the addition to an acyl acceptor of two carbons from malonyl-ACP. Catalyzes the first condensation reaction which initiates fatty acid synthesis and may therefore play a role in governing the total rate of fatty acid production. Possesses both acetoacetyl-ACP synthase and acetyl transacylase activities. Its substrate specificity determines the biosynthesis of branched-chain and/or straight-chain of fatty acids. The chain is Beta-ketoacyl-[acyl-carrier-protein] synthase III from Coxiella burnetii (strain Dugway 5J108-111).